The sequence spans 354 residues: UPF0425 pyridoxal phosphate-dependent protein MMP0002 (354 aa).

An N6-(pyridoxal phosphate)lysine modification is found at Lys-210.

The protein belongs to the UPF0425 family. It depends on pyridoxal 5'-phosphate as a cofactor.

The polypeptide is UPF0425 pyridoxal phosphate-dependent protein MMP0002 (Methanococcus maripaludis (strain DSM 14266 / JCM 13030 / NBRC 101832 / S2 / LL)).